Consider the following 38-residue polypeptide: Photosystem II reaction center protein Y (38 aa).

A helical transmembrane segment spans residues 5 to 23 (VVVVLAPVIIAGSWAIFNI).

The protein belongs to the PsbY family. In terms of assembly, PSII is composed of 1 copy each of membrane proteins PsbA, PsbB, PsbC, PsbD, PsbE, PsbF, PsbH, PsbI, PsbJ, PsbK, PsbL, PsbM, PsbT, PsbX, PsbY, PsbZ, Psb30/Ycf12, peripheral proteins PsbO, CyanoQ (PsbQ), PsbU, PsbV and a large number of cofactors. It forms dimeric complexes.

It localises to the cellular thylakoid membrane. Loosely associated component of the core of photosystem II (PSII), it is not always seen in crystals. PSII is a light-driven water plastoquinone oxidoreductase, using light energy to abstract electrons from H(2)O, generating a proton gradient subsequently used for ATP formation. The chain is Photosystem II reaction center protein Y from Picosynechococcus sp. (strain ATCC 27264 / PCC 7002 / PR-6) (Agmenellum quadruplicatum).